The following is a 1051-amino-acid chain: MSQQLQQAVEIAYSSTAEPALKKQALEYVQNVKAGAGAAEVFVGYLGDAGTSDVGRFVALQALSELAGEGGPARLAFLKDSAMRALRGETGGVWGAPEYVRNKTAEWVSRLFYAMYGEVNGNMWNSFFEDVAQATGVAGLRGSAAVEYNAAGLDAFLRVCAAINSEIGDQTFVRSKDAQVKNNSLKDAMRVQDVATLTSIWRHALEAMRQDVQRQDVAVLVLQCIGSFISWIDINLIVNSEYISTIYAYLNYPKTRIACAQCLCEILSKKMKPGDKLQLLGMLSLTDKVLQLGDVEVEVHEQLAKLTSSVGLELSVILEQCHDDSSSAGSCSIANSADHQIIHQVAPLVLKFMNHEYDSVTQQTFPFISHYLTFLKRLFALGGKPGSAVALNSKKLPLDDDHRQFLTSLIIVCMNKMKFDETCSYDDEDEVEEFVETVRSKLKVFQDNIAVINPAIYMENISKHIKSLLLGNSWRDLELAIYQMHNFAESIRNNLFGLNKSAISQSQPAQLMTTFMQDILDNSAIFQSSNPLIQISFFELIVRHYNFISHTGKNDISILSIFCTPFSMFNDSEKVRLRSWYLFSRLIKVTKPRLDDESLSQLLSKLAPLLAVKLLPNVANDSEIDTTFDNQLYIFEGVGILIGAKAKEEYSILDGVLSPLFADLESCIAAPVKSPEIVVQAHHILMAIGTIARGVHAGLVPENQLNNPQVNAALVHKSLIEKFSNIAEVILVTFSYFNKYETIRDATRFSFARLTPILKNDIIPFSSRLISIFLESDLKTIEMNDFLGFLGQMVHTFHADDNCYQLFNNLFTPVIKKVFDLVAQVEQEGSLASGANTAPAVSKVANGKNVVITDSFRDKVQLKKAYYSFLQSFVSNNVTSLLLTTANRNILPLILSDLLSYTPAEIHETSSMKLSLNVLINFVKFFGTGRCADFKDRNANTFEPLEGLSEFFITKVVPLVFEIPFKPEYEFNIDDGSCLVLAADLSRLLKALYDVNGDPANNASLKYLTEAYFPQVQFPQELSMEFIQTLATADEKAFEKYFVSFIKRMRS.

Belongs to the exportin family.

It localises to the nucleus. It is found in the cytoplasm. Its function is as follows. tRNA nucleus export receptor which facilitates tRNA translocation across the nuclear pore complex. Involved in pre-tRNA splicing, probably by affecting the interaction of pre-tRNA with splicing endonuclease. This Eremothecium gossypii (strain ATCC 10895 / CBS 109.51 / FGSC 9923 / NRRL Y-1056) (Yeast) protein is Exportin-T (LOS1).